Here is a 283-residue protein sequence, read N- to C-terminus: Thymidylate synthase (283 aa).

A dUMP-binding site is contributed by R22. C160 (nucleophile) is an active-site residue. DUMP contacts are provided by residues 180 to 183 (RSCD), N191, and 221 to 223 (HIY). D183 contributes to the (6R)-5,10-methylene-5,6,7,8-tetrahydrofolate binding site. A (6R)-5,10-methylene-5,6,7,8-tetrahydrofolate-binding site is contributed by S282.

Belongs to the thymidylate synthase family. Bacterial-type ThyA subfamily. As to quaternary structure, homodimer.

The protein localises to the cytoplasm. The catalysed reaction is dUMP + (6R)-5,10-methylene-5,6,7,8-tetrahydrofolate = 7,8-dihydrofolate + dTMP. It participates in pyrimidine metabolism; dTTP biosynthesis. Catalyzes the reductive methylation of 2'-deoxyuridine-5'-monophosphate (dUMP) to 2'-deoxythymidine-5'-monophosphate (dTMP) while utilizing 5,10-methylenetetrahydrofolate (mTHF) as the methyl donor and reductant in the reaction, yielding dihydrofolate (DHF) as a by-product. This enzymatic reaction provides an intracellular de novo source of dTMP, an essential precursor for DNA biosynthesis. The polypeptide is Thymidylate synthase (Tolumonas auensis (strain DSM 9187 / NBRC 110442 / TA 4)).